A 91-amino-acid polypeptide reads, in one-letter code: Bacterial microcompartment shell vertex protein PduN (91 aa).

The region spanning 1-87 is the BMV domain; sequence MHLARVTGAV…IDLAVVGIVD (87 aa).

It belongs to the CcmL/EutN family. In terms of assembly, homopentamer. Interacts with shell protein PduA.

It is found in the bacterial microcompartment. It functions in the pathway polyol metabolism; 1,2-propanediol degradation. Functionally, probably forms vertices in the shell of the bacterial microcompartment (BMC) dedicated to 1,2-propanediol (1,2-PD) degradation. Required for structural integrity of BMCs and to mitigate propionaldehyde toxicity. In terms of biological role, the 1,2-PD-specific bacterial microcompartment (BMC) concentrates low levels of 1,2-PD catabolic enzymes, concentrates volatile reaction intermediates thus enhancing pathway flux and keeps the level of toxic, mutagenic propionaldehyde low. This Salmonella typhimurium (strain LT2 / SGSC1412 / ATCC 700720) protein is Bacterial microcompartment shell vertex protein PduN.